A 115-amino-acid polypeptide reads, in one-letter code: NAD(P)H-quinone oxidoreductase subunit M (115 aa).

Belongs to the complex I NdhM subunit family. As to quaternary structure, NDH-1 can be composed of about 15 different subunits; different subcomplexes with different compositions have been identified which probably have different functions.

The protein resides in the cellular thylakoid membrane. The catalysed reaction is a plastoquinone + NADH + (n+1) H(+)(in) = a plastoquinol + NAD(+) + n H(+)(out). It carries out the reaction a plastoquinone + NADPH + (n+1) H(+)(in) = a plastoquinol + NADP(+) + n H(+)(out). In terms of biological role, NDH-1 shuttles electrons from an unknown electron donor, via FMN and iron-sulfur (Fe-S) centers, to quinones in the respiratory and/or the photosynthetic chain. The immediate electron acceptor for the enzyme in this species is believed to be plastoquinone. Couples the redox reaction to proton translocation, and thus conserves the redox energy in a proton gradient. Cyanobacterial NDH-1 also plays a role in inorganic carbon-concentration. The chain is NAD(P)H-quinone oxidoreductase subunit M from Synechococcus sp. (strain CC9605).